Here is a 118-residue protein sequence, read N- to C-terminus: Ribonuclease P protein component (118 aa).

It belongs to the RnpA family. As to quaternary structure, consists of a catalytic RNA component (M1 or rnpB) and a protein subunit.

It catalyses the reaction Endonucleolytic cleavage of RNA, removing 5'-extranucleotides from tRNA precursor.. Functionally, RNaseP catalyzes the removal of the 5'-leader sequence from pre-tRNA to produce the mature 5'-terminus. It can also cleave other RNA substrates such as 4.5S RNA. The protein component plays an auxiliary but essential role in vivo by binding to the 5'-leader sequence and broadening the substrate specificity of the ribozyme. The sequence is that of Ribonuclease P protein component from Rickettsia akari (strain Hartford).